We begin with the raw amino-acid sequence, 316 residues long: Ribosomal RNA small subunit methyltransferase H (316 aa).

Residues 42–44, Asp62, Phe86, Asp104, and Gln111 each bind S-adenosyl-L-methionine; that span reads GGH.

This sequence belongs to the methyltransferase superfamily. RsmH family.

The protein resides in the cytoplasm. The enzyme catalyses cytidine(1402) in 16S rRNA + S-adenosyl-L-methionine = N(4)-methylcytidine(1402) in 16S rRNA + S-adenosyl-L-homocysteine + H(+). In terms of biological role, specifically methylates the N4 position of cytidine in position 1402 (C1402) of 16S rRNA. This chain is Ribosomal RNA small subunit methyltransferase H, found in Polynucleobacter necessarius subsp. necessarius (strain STIR1).